The sequence spans 118 residues: UPF0102 protein lpg2994 (118 aa).

This sequence belongs to the UPF0102 family.

This Legionella pneumophila subsp. pneumophila (strain Philadelphia 1 / ATCC 33152 / DSM 7513) protein is UPF0102 protein lpg2994.